The following is a 321-amino-acid chain: Ornithine carbamoyltransferase (321 aa).

Carbamoyl phosphate is bound by residues Ser53–Thr56, Gln80, Arg104, and His131–Gln134. L-ornithine is bound by residues Asn166, Asp230, and Ser234 to Met235. Carbamoyl phosphate-binding positions include Cys270–Leu271 and Arg298.

Belongs to the aspartate/ornithine carbamoyltransferase superfamily. OTCase family.

It is found in the cytoplasm. It carries out the reaction carbamoyl phosphate + L-ornithine = L-citrulline + phosphate + H(+). The protein operates within amino-acid degradation; L-arginine degradation via ADI pathway; carbamoyl phosphate from L-arginine: step 2/2. Functionally, reversibly catalyzes the transfer of the carbamoyl group from carbamoyl phosphate (CP) to the N(epsilon) atom of ornithine (ORN) to produce L-citrulline. The protein is Ornithine carbamoyltransferase of Bifidobacterium longum subsp. infantis (strain ATCC 15697 / DSM 20088 / JCM 1222 / NCTC 11817 / S12).